Reading from the N-terminus, the 479-residue chain is Probable glycine dehydrogenase (decarboxylating) subunit 2 (479 aa).

Position 265 is an N6-(pyridoxal phosphate)lysine (Lys-265).

Belongs to the GcvP family. C-terminal subunit subfamily. In terms of assembly, the glycine cleavage system is composed of four proteins: P, T, L and H. In this organism, the P 'protein' is a heterodimer of two subunits. Pyridoxal 5'-phosphate is required as a cofactor.

The catalysed reaction is N(6)-[(R)-lipoyl]-L-lysyl-[glycine-cleavage complex H protein] + glycine + H(+) = N(6)-[(R)-S(8)-aminomethyldihydrolipoyl]-L-lysyl-[glycine-cleavage complex H protein] + CO2. Functionally, the glycine cleavage system catalyzes the degradation of glycine. The P protein binds the alpha-amino group of glycine through its pyridoxal phosphate cofactor; CO(2) is released and the remaining methylamine moiety is then transferred to the lipoamide cofactor of the H protein. The chain is Probable glycine dehydrogenase (decarboxylating) subunit 2 from Pseudothermotoga lettingae (strain ATCC BAA-301 / DSM 14385 / NBRC 107922 / TMO) (Thermotoga lettingae).